Reading from the N-terminus, the 140-residue chain is LGEKPFTCMECSKSFSQKSNLQTHYKIHTGEKPFTCMECGRTFSQKSTLLSHYKMHTGERPFSCSECGKSFSHKNKLTLHQKIHTGEKPYACTECGKRFPEKSKLKIHWKIHTREKPFSCTECGKKFSRESNLYFHQKMH.

5 consecutive C2H2-type zinc fingers follow at residues Phe-6–His-28, Phe-34–His-56, Phe-62–His-84, Tyr-90–His-112, and Phe-118–His-140.

Belongs to the krueppel C2H2-type zinc-finger protein family.

The protein localises to the nucleus. In terms of biological role, may be involved in transcriptional regulation. In Xenopus laevis (African clawed frog), this protein is Gastrula zinc finger protein XlCGF49.1.